Reading from the N-terminus, the 490-residue chain is Acetyl-coenzyme A carboxylase carboxyl transferase subunit beta, chloroplastic (490 aa).

Positions 184–203 (LNSSENEGSSRRTRTKGSDL) are disordered. Positions 221–490 (LWVQCENCYG…PLNQKSSKIK (270 aa)) constitute a CoA carboxyltransferase N-terminal domain. Residues Cys225, Cys228, Cys244, and Cys247 each contribute to the Zn(2+) site. Residues 225-247 (CENCYGLNYKKFLKSKMNICEQC) form a C4-type zinc finger.

The protein belongs to the AccD/PCCB family. In terms of assembly, acetyl-CoA carboxylase is a heterohexamer composed of biotin carboxyl carrier protein, biotin carboxylase and 2 subunits each of ACCase subunit alpha and ACCase plastid-coded subunit beta (accD). Zn(2+) serves as cofactor. As to expression, RNA expressed in leaf, root, stem, and tuber; the least expression occurs in stems. RNA persists even in senescent leaves.

It is found in the plastid. It localises to the chloroplast stroma. It carries out the reaction N(6)-carboxybiotinyl-L-lysyl-[protein] + acetyl-CoA = N(6)-biotinyl-L-lysyl-[protein] + malonyl-CoA. It functions in the pathway lipid metabolism; malonyl-CoA biosynthesis; malonyl-CoA from acetyl-CoA: step 1/1. Its function is as follows. Component of the acetyl coenzyme A carboxylase (ACC) complex. Biotin carboxylase (BC) catalyzes the carboxylation of biotin on its carrier protein (BCCP) and then the CO(2) group is transferred by the transcarboxylase to acetyl-CoA to form malonyl-CoA. The sequence is that of Acetyl-coenzyme A carboxylase carboxyl transferase subunit beta, chloroplastic from Solanum tuberosum (Potato).